The sequence spans 538 residues: Putative cysteine ligase BshC (538 aa).

Residues Lys-460–Leu-484 adopt a coiled-coil conformation.

It belongs to the BshC family.

Its function is as follows. Involved in bacillithiol (BSH) biosynthesis. May catalyze the last step of the pathway, the addition of cysteine to glucosamine malate (GlcN-Mal) to generate BSH. In Bacillus cereus (strain AH820), this protein is Putative cysteine ligase BshC.